A 406-amino-acid chain; its full sequence is Protrudin (406 aa).

Topologically, residues 1–71 (MQAAERDGVA…AAEGVRALLR (71 aa)) are cytoplasmic. The segment at 1 to 97 (MQAAERDGVA…LLLTLDQAAW (97 aa)) is sufficient for homooligomerization. The interval 1–210 (MQAAERDGVA…LYLLPLCWVM (210 aa)) is sufficient for localization to endoplasmic reticulum tubular network. The helical transmembrane segment at 72–92 (WQRPLCSLLVCLGLNFLLLTL) threads the bilayer. Position 93 (Asp93) is a topological domain, lumenal. The chain crosses the membrane as a helical span at residues 94-114 (QAAWYSVLALLVLLPALLGYL). Residues 115 to 192 (QETYRVRPSE…NPTVSSQFYG (78 aa)) lie on the Cytoplasmic side of the membrane. An intramembrane region (helical) is located at residues 193–213 (ALLGSVCILYLLPLCWVMAIL). Residues 214–406 (NSTLFLGNSQ…CAQCNQMLIK (193 aa)) are Cytoplasmic-facing. Residues 239-295 (LGTKPLESAPEPAKPLPTDAPPDRTPTPTSTEDLTPGSVEEAEEAEPDEEFKDAIEE) are disordered. Positions 250–263 (PAKPLPTDAPPDRT) are enriched in pro residues. The segment covering 278–295 (EEAEEAEPDEEFKDAIEE) has biased composition (acidic residues). Residues 339–405 (SNNFGTCTGC…VCAQCNQMLI (67 aa)) form an FYVE-type zinc finger. Residues Cys345, Cys348, Cys361, Cys364, Cys369, Cys372, Cys397, and Cys400 each contribute to the Zn(2+) site.

Can form homooligomers (monomers, dimers and tetramers).

Its subcellular location is the recycling endosome membrane. It is found in the endoplasmic reticulum membrane. It localises to the cell projection. The protein localises to the growth cone membrane. Its function is as follows. Key regulator of RAB11-dependent vesicular trafficking during neurite extension through polarized membrane transport. Promotes axonal elongation and contributes to the establishment of neuronal cell polarity. Involved in nerve growth factor-induced neurite formation in VAPA-dependent manner. Contributes to both the formation and stabilization of the tubular ER network. Involved in ER morphogenesis by regulating the sheet-to-tubule balance and possibly the density of tubule interconnections. The sequence is that of Protrudin (ZFYVE27) from Gallus gallus (Chicken).